The primary structure comprises 347 residues: UPF0324 membrane protein Atu0671 (347 aa).

The next 10 membrane-spanning stretches (helical) occupy residues 15-37 (LRWL…AAIL), 50-72 (WLGD…SLPV), 105-127 (AGGL…SYAA), 140-162 (LIAC…AIGA), 172-194 (AFTA…LLGL), 201-223 (IFAG…LGAV), 233-250 (LIRV…SVIH), 263-282 (MVPW…SFGL), 287-309 (LLSP…LGLS), and 322-344 (VIIA…ILLT).

It belongs to the UPF0324 family.

It localises to the cell membrane. This is UPF0324 membrane protein Atu0671 from Agrobacterium fabrum (strain C58 / ATCC 33970) (Agrobacterium tumefaciens (strain C58)).